A 330-amino-acid chain; its full sequence is ADP-L-glycero-D-manno-heptose-6-epimerase (330 aa).

NADP(+) contacts are provided by residues 11 to 12 (FI), 32 to 33 (DN), K39, K54, 75 to 79 (EGACS), and N92. Y139 (proton acceptor) is an active-site residue. K143 contributes to the NADP(+) binding site. Residue N168 coordinates substrate. The NADP(+) site is built by V169 and K177. The Proton acceptor role is filled by K177. Substrate-binding positions include R179, H186, 200–203 (FGEY), R213, and Y292.

This sequence belongs to the NAD(P)-dependent epimerase/dehydratase family. HldD subfamily. Homopentamer. Requires NADP(+) as cofactor.

The enzyme catalyses ADP-D-glycero-beta-D-manno-heptose = ADP-L-glycero-beta-D-manno-heptose. It functions in the pathway nucleotide-sugar biosynthesis; ADP-L-glycero-beta-D-manno-heptose biosynthesis; ADP-L-glycero-beta-D-manno-heptose from D-glycero-beta-D-manno-heptose 7-phosphate: step 4/4. Functionally, catalyzes the interconversion between ADP-D-glycero-beta-D-manno-heptose and ADP-L-glycero-beta-D-manno-heptose via an epimerization at carbon 6 of the heptose. This is ADP-L-glycero-D-manno-heptose-6-epimerase from Burkholderia thailandensis (strain ATCC 700388 / DSM 13276 / CCUG 48851 / CIP 106301 / E264).